The primary structure comprises 77 residues: Small ribosomal subunit protein uS4 (77 aa).

Positions 45–77 (PFGGGRPGRVKRKNQKAAAKKASGGDGDEEDEE) are disordered. Residues 52–63 (GRVKRKNQKAAA) are compositionally biased toward basic residues.

Belongs to the universal ribosomal protein uS4 family.

In Nicotiana tabacum (Common tobacco), this protein is Small ribosomal subunit protein uS4 (RPS9).